Consider the following 127-residue polypeptide: Ribosome-binding factor A (127 aa).

It belongs to the RbfA family. As to quaternary structure, monomer. Binds 30S ribosomal subunits, but not 50S ribosomal subunits or 70S ribosomes.

The protein resides in the cytoplasm. One of several proteins that assist in the late maturation steps of the functional core of the 30S ribosomal subunit. Associates with free 30S ribosomal subunits (but not with 30S subunits that are part of 70S ribosomes or polysomes). Required for efficient processing of 16S rRNA. May interact with the 5'-terminal helix region of 16S rRNA. This is Ribosome-binding factor A from Geobacillus kaustophilus (strain HTA426).